The primary structure comprises 1022 residues: Sodium-dependent transporter snf-12 (1022 aa).

Residues 1 to 165 (MNGEWKSALR…RRELWRTQKD (165 aa)) are Cytoplasmic-facing. Residues 166-185 (FFLSCLGFMVGVGHTMRFPA) traverse the membrane as a helical segment. The Extracellular segment spans residues 186–192 (KVYQHGG). A helical transmembrane segment spans residues 193–213 (GVFFIPYLFSLIFFGLPLVFL). The Cytoplasmic portion of the chain corresponds to 214–241 (HLSLGQYTGQAANTAFQRLMPIGSGVGW). Residues 242-262 (ALVVIAIPVAVYYNIIVAWAI) traverse the membrane as a helical segment. The Extracellular segment spans residues 263-337 (HYFFQSAKGL…DFALGPLQSH (75 aa)). Residues 338 to 358 (LVLSLAAAWLLVFFGVFKGLG) traverse the membrane as a helical segment. Position 359 (S359) is a topological domain, cytoplasmic. A helical membrane pass occupies residues 360 to 380 (IAQTMNVTATVPYLLLSILLL). At 381–412 (RGISLPGANKGLTFLFTVDSTKLWKWQIWKSA) the chain is on the extracellular side. The chain crosses the membrane as a helical span at residues 413-433 (AEQVFYELGIDAGPLISMAAF). Topologically, residues 434–444 (SRYRNNIYRDS) are cytoplasmic. The chain crosses the membrane as a helical span at residues 445-465 (VLLVIMDALTSCLSGMVIFSF). The Extracellular segment spans residues 466 to 498 (VGFIASESNSNVNDVLKHDPLYLSFTVYPGVTS). Residues 499-519 (FMYWGGLWATLFFGMLVLAAI) traverse the membrane as a helical segment. Residues 520 to 550 (DAEFAWLEMIASAFMNHFSMKNKAVENRLLA) are Cytoplasmic-facing. The chain crosses the membrane as a helical span at residues 551-571 (FLCLAGFFLGLPLCAQGGIFV). At 572 to 584 (FHAIENLNANWNS) the chain is on the extracellular side. A helical membrane pass occupies residues 585–605 (FSLALLSVAIVCYVYGIDNYL). The Cytoplasmic segment spans residues 606 to 641 (TDISAMLRVPRIQISKATRLKEKLIYFFGPGGIYIK). Residues 642–662 (FSLCFICPVILTVLLVASVLG) traverse the membrane as a helical segment. The Extracellular portion of the chain corresponds to 663 to 677 (YQRISFAGRPIPIDY). The chain crosses the membrane as a helical span at residues 678 to 698 (EIVAWIVMIGPLLVVPLVAFM). Residues 699-1022 (QIRQIRNEGK…RPKPIDMPPK (324 aa)) lie on the Cytoplasmic side of the membrane. 2 disordered regions span residues 867 to 948 (RIPN…SSDD) and 995 to 1022 (IYDQEQKNGRSKVLSQLKRPKPIDMPPK). Pro residues predominate over residues 893–907 (SDPPVPTSPLPPPPK). Positions 933 to 943 (DDSPSISNSSD) are enriched in low complexity.

This sequence belongs to the sodium:neurotransmitter symporter (SNF) (TC 2.A.22) family. In terms of assembly, may interact with STAT family transcription factor sta-2; the interaction is probably direct.

It localises to the membrane. The protein localises to the cytoplasm. It is found in the vesicle. Functionally, probably mediates sodium-dependent uptake of unknown small molecule(s). By positively modulating expression, in the epidermis, of antimicrobial peptides such as nlp-29, plays a role in resistance to fungal infection and in the response to physical wounding and phorbol ester PMA treatment. Role in response to wounding of the epidermis may be facilitated by recruitment of snf-12 to the wound site by microtubule-dependent vesicle trafficking. Functions cell autonomously in the epidermis, in concert with STAT transcription factor sta-2, probably acting at vesicular membranes, downstream of a p38 MAPK/pmk-1 pathway. This Caenorhabditis elegans protein is Sodium-dependent transporter snf-12.